The chain runs to 488 residues: Acetyl-CoA decarbonylase/synthase complex subunit gamma (488 aa).

The 4Fe-4S domain maps to 1 to 61 (MPKKISAMDI…FEKNKKKIIE (61 aa)). Residues C19, C22, C27, and C44 each coordinate [4Fe-4S] cluster.

In terms of assembly, heterodimer of delta and gamma chains. The ACDS complex is made up of alpha, epsilon, beta, gamma and delta chains with a probable stoichiometry of (alpha(2)epsilon(2))(4)-beta(8)-(gamma(1)delta(1))(8). Corrinoid is required as a cofactor. [4Fe-4S] cluster serves as cofactor.

The enzyme catalyses 5,6,7,8-tetrahydrosarcinapterin + methyl-Co(III)-[corrinoid Fe-S protein] = 5-methyltetrahydrosarcinapterin + Co(I)-[corrinoid Fe-S protein] + H(+). Functionally, part of a complex that catalyzes the reversible cleavage of acetyl-CoA, allowing autotrophic growth from CO(2). In Methanocaldococcus jannaschii (strain ATCC 43067 / DSM 2661 / JAL-1 / JCM 10045 / NBRC 100440) (Methanococcus jannaschii), this protein is Acetyl-CoA decarbonylase/synthase complex subunit gamma.